Consider the following 207-residue polypeptide: Enolase (207 aa).

Residue Gln162 coordinates (2R)-2-phosphoglycerate. Residue Glu204 is the Proton donor of the active site.

Belongs to the enolase family.

The protein localises to the cytoplasm. It localises to the secreted. Its subcellular location is the cell surface. It carries out the reaction (2R)-2-phosphoglycerate = phosphoenolpyruvate + H2O. It participates in carbohydrate degradation; glycolysis; pyruvate from D-glyceraldehyde 3-phosphate: step 4/5. Functionally, catalyzes the reversible conversion of 2-phosphoglycerate (2-PG) into phosphoenolpyruvate (PEP). It is essential for the degradation of carbohydrates via glycolysis. This Campylobacter fetus protein is Enolase.